The primary structure comprises 83 residues: uncharacterized protein (83 aa).

This is an uncharacterized protein from Escherichia coli (strain K12).